A 676-amino-acid chain; its full sequence is Zinc finger protein 418 (676 aa).

A KRAB domain is found at 5–91 (VAFEDVAVNF…HSCEMCGAIL (87 aa)). C2H2-type zinc fingers lie at residues 82 to 105 (HSCE…GTHH), 230 to 252 (CYCW…QRVH), 258 to 280 (YECG…QRVH), 286 to 308 (YECG…QRVH), 314 to 336 (YECG…QRVH), 342 to 364 (YECE…QRGH), 370 to 392 (YECE…HRVH), 398 to 420 (YECG…QRGH), 426 to 448 (YECG…QRSH), 454 to 476 (YECR…QRVH), 482 to 504 (YECN…QRVH), 510 to 532 (FECS…RRVH), 538 to 560 (YECG…QKTH), 591 to 613 (YECR…QRLH), 619 to 641 (YECS…RRVH), and 647 to 669 (YECS…QRVH).

It belongs to the krueppel C2H2-type zinc-finger protein family. Highly expressed in heart.

Its subcellular location is the nucleus. In terms of biological role, transcriptional repressor. May play a role as regulator of the ubiquitin-proteasome system and autophagy-lysosomal pathway. The polypeptide is Zinc finger protein 418 (ZNF418) (Homo sapiens (Human)).